Here is a 283-residue protein sequence, read N- to C-terminus: Pantothenate synthetase (283 aa).

31–38 contributes to the ATP binding site; that stretch reads MGALHDGH. His-38 serves as the catalytic Proton donor. Gln-62 is a (R)-pantoate binding site. Residue Gln-62 coordinates beta-alanine. Residue 148-151 coordinates ATP; it reads GKKD. Gln-154 is a (R)-pantoate binding site. Residues Val-177 and 185–188 each bind ATP; that span reads KSSR.

Belongs to the pantothenate synthetase family. In terms of assembly, homodimer.

Its subcellular location is the cytoplasm. It carries out the reaction (R)-pantoate + beta-alanine + ATP = (R)-pantothenate + AMP + diphosphate + H(+). It participates in cofactor biosynthesis; (R)-pantothenate biosynthesis; (R)-pantothenate from (R)-pantoate and beta-alanine: step 1/1. Functionally, catalyzes the condensation of pantoate with beta-alanine in an ATP-dependent reaction via a pantoyl-adenylate intermediate. The chain is Pantothenate synthetase from Staphylococcus aureus (strain MSSA476).